We begin with the raw amino-acid sequence, 305 residues long: tRNA pseudouridine synthase B (305 aa).

Residue D39 is the Nucleophile of the active site.

The protein belongs to the pseudouridine synthase TruB family. Type 1 subfamily.

It carries out the reaction uridine(55) in tRNA = pseudouridine(55) in tRNA. Functionally, responsible for synthesis of pseudouridine from uracil-55 in the psi GC loop of transfer RNAs. The sequence is that of tRNA pseudouridine synthase B from Staphylococcus haemolyticus (strain JCSC1435).